Consider the following 262-residue polypeptide: Lens fiber major intrinsic protein (262 aa).

The Cytoplasmic portion of the chain corresponds to 1–9; the sequence is MRELRSSSF. A helical transmembrane segment spans residues 10–29; sequence WRAILAEFLGSLLYTLLGLG. The Extracellular portion of the chain corresponds to 30-41; sequence ASLRWAPGPHGV. A helical transmembrane segment spans residues 42–59; sequence LGSALAFGLAQATLVQAL. The Cytoplasmic segment spans residues 60 to 61; that stretch reads GH. An intramembrane region (discontinuously helical) is located at residues 62 to 77; that stretch reads VSGGHINPAITLAFLL. The short motif at 68–70 is the NPA 1 element; it reads NPA. Topologically, residues 78-82 are cytoplasmic; sequence ASQLS. The helical transmembrane segment at 83 to 106 threads the bilayer; that stretch reads LPRALGYLLAQLLGALAGAGVLYG. Residues 107 to 127 lie on the Extracellular side of the membrane; the sequence is VTPAAVRGTLGLSALHPSVGP. A helical membrane pass occupies residues 128-148; that stretch reads GQGTVVELLLTAQFILCVFAS. The Cytoplasmic portion of the chain corresponds to 149 to 156; sequence FDDRHDGR. A helical membrane pass occupies residues 157–175; that stretch reads PGSAALPVGFSLALGHLFG. Topologically, residues 176-178 are extracellular; that stretch reads IPF. An intramembrane region (discontinuously helical) is located at residues 179 to 193; it reads TGAGMNPARSFAPAV. Positions 184 to 186 match the NPA 2 motif; that stretch reads NPA. Residues 194-200 lie on the Extracellular side of the membrane; the sequence is ITRNFTN. A helical membrane pass occupies residues 201 to 222; it reads HWVFWAGPLLGAALAALLYELA. At 223 to 262 the chain is on the cytoplasmic side; sequence LCPRARSMAERLAVLRGEPPAAAPPPEPPAEPLELKTQGL. Positions 227–237 are interaction with CALM; the sequence is ARSMAERLAVL. Residues 240 to 262 are disordered; that stretch reads EPPAAAPPPEPPAEPLELKTQGL. Residues 243-253 are compositionally biased toward pro residues; sequence AAAPPPEPPAE.

Belongs to the MIP/aquaporin (TC 1.A.8) family. In terms of assembly, homotetramer; each monomer provides an independent water pore. Two homotetramers on opposing membranes can dimerize, forming a cell-cell junction. Interacts with CALM; the calcium-calmodulin/CALM complex interacts with the cytoplasmic domains of two aquaporins, leading to channel closure. During early stages of lens development, interacts through its C-terminal region with Cx56 and GJA8/Cx45.6. In terms of tissue distribution, major component of lens fiber gap junctions.

The protein resides in the cell membrane. It localises to the cell junction. It carries out the reaction H2O(in) = H2O(out). Its activity is regulated as follows. The water channel activity is inhibited by calcium through calmodulin/CALM. Aquaporins form homotetrameric transmembrane channels, with each monomer independently mediating water transport across the plasma membrane along its osmotic gradient. Specifically expressed in lens fiber cells, this aquaporin is crucial for maintaining lens water homeostasis and transparency. Beyond water permeability, it also acts as a cell-to-cell adhesion molecule, forming thin junctions between lens fiber cells that are essential for maintaining the ordered structure and transparency of the lens. The chain is Lens fiber major intrinsic protein from Gallus gallus (Chicken).